The following is a 37-amino-acid chain: Large ribosomal subunit protein bL36c (37 aa).

Belongs to the bacterial ribosomal protein bL36 family.

It is found in the plastid. Its subcellular location is the chloroplast. This Acorus calamus (Sweet flag) protein is Large ribosomal subunit protein bL36c.